We begin with the raw amino-acid sequence, 443 residues long: Phosphoglucosamine mutase (443 aa).

The active-site Phosphoserine intermediate is the serine 100. Mg(2+) is bound by residues serine 100, aspartate 240, aspartate 242, and aspartate 244. Phosphoserine is present on serine 100.

This sequence belongs to the phosphohexose mutase family. The cofactor is Mg(2+). Activated by phosphorylation.

The catalysed reaction is alpha-D-glucosamine 1-phosphate = D-glucosamine 6-phosphate. Catalyzes the conversion of glucosamine-6-phosphate to glucosamine-1-phosphate. The sequence is that of Phosphoglucosamine mutase from Carboxydothermus hydrogenoformans (strain ATCC BAA-161 / DSM 6008 / Z-2901).